Consider the following 82-residue polypeptide: Acyl carrier protein (82 aa).

The region spanning 3-81 (SSEQEILAGL…DAVTYIAGAQ (79 aa)) is the Carrier domain. The residue at position 41 (Ser41) is an O-(pantetheine 4'-phosphoryl)serine.

Belongs to the acyl carrier protein (ACP) family. In terms of processing, 4'-phosphopantetheine is transferred from CoA to a specific serine of apo-ACP by AcpS. This modification is essential for activity because fatty acids are bound in thioester linkage to the sulfhydryl of the prosthetic group.

The protein localises to the cytoplasm. It participates in lipid metabolism; fatty acid biosynthesis. Functionally, carrier of the growing fatty acid chain in fatty acid biosynthesis. The protein is Acyl carrier protein of Beutenbergia cavernae (strain ATCC BAA-8 / DSM 12333 / CCUG 43141 / JCM 11478 / NBRC 16432 / NCIMB 13614 / HKI 0122).